A 780-amino-acid chain; its full sequence is MESIMKVAMDKAAEQLIQQFGFDYLQQQLQLQHQNQHNSSPQQPQHQQLEPENEHLTYQYQQSKPTHMQQLACNYQPRHSTTTSSPSSTHSLASGGGSSSNSSNSSSSDSSSINISHISNISNISNIGNISNSNHSNAAYSLAVHSYQKQIESPANPSHVPHHQMDLSPLSENGSPNGTPGAQTPTATASGNTAAALASAAAAAAAATSGGNGSSITNCNSNNSSSSSNAQQQLQLGNYKTNSCWCYGESVCSGIEVEIENNNNNHIHHGETTYHMKILVPAVASGAIIGKGGETIASLQKDTGARVKMSKSHDFYPGTTERVCLITGSTEAIMVVMEFIMDKIREKPDLTNKIVDTDSKQTQERDKQVKILVPNSTAGMIIGKGGAFIKQIKEESGSYVQISQKPTDVSLQERCITIIGDKENNKNACKMILSKIVEDPQSGTCLNVSYADVSGPVANFNPTGSPYATNQNAINSSTASLNSTLGTTIGGANSAASLLVNGTGINLSINLGSPNPAPNLAVATQLLEHIKVAMRGSGYSETVTNEVVAALSVLAKYGVLGMGVGVSHTNGAHSTLGNFLGVTTLDQQTAAAASAATASNVFGAVGQVNLEQYAAAVASAAAASRPTQSQLDAAAVQFDPFRHLGSATAPAATPVSLNNNSFGLTATTGTATTAQLGGLSKSPTPGDLSSKDSKNVEVPEVIIGAILGPSGRSLVEIQHVSGANVQISKKGIFAPGTRNRIVTITGQPSAIAKAQYLIEQKINEEETKRARQIPLTTVVN.

Disordered regions lie at residues 31–50 (LQHQ…QQLE), 76–113 (QPRH…SSSI), and 150–190 (QIES…ATAS). Low complexity-rich tracts occupy residues 79-91 (HSTT…STHS), 99-113 (SSNS…SSSI), and 176-190 (PNGT…ATAS). KH domains are found at residues 273–340 (TYHM…MEFI), 366–432 (DKQV…CKMI), and 691–758 (KDSK…QYLI). The disordered stretch occupies residues 674–693 (AQLGGLSKSPTPGDLSSKDS). A required for RNA binding region spans residues 686–776 (GDLSSKDSKN…TKRARQIPLT (91 aa)).

Expressed in the central nervous system in mushroom body neurons (at protein level).

It is found in the nucleus. Its subcellular location is the cytoplasm. Functionally, functions to regulate alternative splicing in neurons by binding pre-mRNA in a sequence-specific manner to activate exon inclusion. Plays a role in long-term memory formation by processing the unspliced Orb2-isoform A (Orb2A) mRNA and thereby controlling Orb2A protein abundance. In Drosophila melanogaster (Fruit fly), this protein is RNA-binding protein Pasilla.